The primary structure comprises 1024 residues: Beta-galactosidase (1024 aa).

The substrate site is built by asparagine 103 and aspartate 202. Residue aspartate 202 participates in Na(+) binding. Positions 417, 419, and 462 each coordinate Mg(2+). Substrate-binding positions include glutamate 462 and 538-541 (EYAH). Glutamate 462 acts as the Proton donor in catalysis. Glutamate 538 serves as the catalytic Nucleophile. Residue asparagine 598 participates in Mg(2+) binding. Positions 602 and 605 each coordinate Na(+). Positions 605 and 1000 each coordinate substrate.

Belongs to the glycosyl hydrolase 2 family. Homotetramer. Requires Mg(2+) as cofactor. Na(+) is required as a cofactor.

It carries out the reaction Hydrolysis of terminal non-reducing beta-D-galactose residues in beta-D-galactosides.. The protein is Beta-galactosidase of Shigella dysenteriae serotype 1 (strain Sd197).